We begin with the raw amino-acid sequence, 301 residues long: Prestalk A differentiation protein A (301 aa).

It belongs to the NmrA-type oxidoreductase family.

Functionally, involved in development and cell differentiation. The sequence is that of Prestalk A differentiation protein A (padA) from Dictyostelium discoideum (Social amoeba).